Reading from the N-terminus, the 177-residue chain is Large ribosomal subunit protein uL6 (177 aa).

Belongs to the universal ribosomal protein uL6 family. In terms of assembly, part of the 50S ribosomal subunit.

This protein binds to the 23S rRNA, and is important in its secondary structure. It is located near the subunit interface in the base of the L7/L12 stalk, and near the tRNA binding site of the peptidyltransferase center. This chain is Large ribosomal subunit protein uL6, found in Janthinobacterium sp. (strain Marseille) (Minibacterium massiliensis).